A 378-amino-acid chain; its full sequence is Alpha-(1,3)-fucosyltransferase fut-5 (378 aa).

Topologically, residues 1-7 are cytoplasmic; sequence MKHNTLR. The chain crosses the membrane as a helical; Signal-anchor for type II membrane protein span at residues 8 to 28; the sequence is AVFQFSFFIGICTFIMIAGYS. The Lumenal segment spans residues 29-378; it reads YQINYNQRMG…CDNSFATRFL (350 aa). N-linked (GlcNAc...) asparagine glycosylation is found at N44, N88, N105, N143, N171, and N307.

Belongs to the glycosyltransferase 10 family. Ca(2+) serves as cofactor. N-glycosylated.

It is found in the golgi apparatus. The protein localises to the golgi stack membrane. The enzyme catalyses a beta-D-galactosyl-(1-&gt;3)-N-acetyl-beta-D-glucosaminyl derivative + GDP-beta-L-fucose = a beta-D-galactosyl-(1-&gt;3)-[alpha-L-fucosyl-(1-&gt;4)]-N-acetyl-beta-D-glucosaminyl derivative + GDP + H(+). Its pathway is protein modification; protein glycosylation. Inhibited by Cu(2+) and Ni(2+), and to a lesser extent by EDTA, Mn(2+) and Mg(2+). Catalyzes the addition of fucose in alpha 1-3 linkage to GalNAc-beta-1-&gt;4-GlcNAc-beta-1-&gt;3-Gal-beta-1-&gt;4-Glc (LDNT)acceptor. Unlike fut-1, does not add fucose to Man-alpha-1-&gt;3-(Man-alpha-1-&gt;6)-Man-beta-1-&gt;4-GlcNAc-beta-1-&gt;4-GlcNAc-beta-1-Asn (M3), Man-alpha-1-&gt;3-(Man-alpha-1-&gt;6)-Man-beta-1-&gt;4-GlcNAc-beta-1-&gt;4-(Fuc-alpha-1-&gt;6)-GlcNAc-beta-1-Asn (M3F6) or GlcNAc-beta-1-&gt;2-Man-alpha-1-&gt;3-(GlcNAc-beta-1-&gt;2-Man-alpha-1-&gt;6)-Man-beta-1-4-GlcNAc-beta-1-&gt;4-(Fuc-alpha-1-&gt;6)-GlcNAc-beta-1-Asn (GnM3F6) acceptors. This Caenorhabditis elegans protein is Alpha-(1,3)-fucosyltransferase fut-5.